Consider the following 388-residue polypeptide: Succinyl-diaminopimelate desuccinylase (388 aa).

H75 contacts Zn(2+). D77 is an active-site residue. Residue D108 coordinates Zn(2+). The active-site Proton acceptor is E142. Residues E143, E171, and H361 each contribute to the Zn(2+) site.

This sequence belongs to the peptidase M20A family. DapE subfamily. As to quaternary structure, homodimer. Zn(2+) serves as cofactor. It depends on Co(2+) as a cofactor.

It carries out the reaction N-succinyl-(2S,6S)-2,6-diaminopimelate + H2O = (2S,6S)-2,6-diaminopimelate + succinate. Its pathway is amino-acid biosynthesis; L-lysine biosynthesis via DAP pathway; LL-2,6-diaminopimelate from (S)-tetrahydrodipicolinate (succinylase route): step 3/3. Its function is as follows. Catalyzes the hydrolysis of N-succinyl-L,L-diaminopimelic acid (SDAP), forming succinate and LL-2,6-diaminopimelate (DAP), an intermediate involved in the bacterial biosynthesis of lysine and meso-diaminopimelic acid, an essential component of bacterial cell walls. The protein is Succinyl-diaminopimelate desuccinylase of Methylocella silvestris (strain DSM 15510 / CIP 108128 / LMG 27833 / NCIMB 13906 / BL2).